The sequence spans 649 residues: FAS-associated factor 1 (649 aa).

The UBA domain maps to 1–57 (MASNMDREMILADFQACTGIENIDEAITLLEQNNWDLVAAINGVIPQENGILQSDFG). Residues 55–84 (DFGGETMPGPTFDPASPPAPAPAPSSSAFR) form a disordered region. Position 319 is a phosphoserine (Ser319). Positions 568 to 645 (NAEPVSKLRI…NLFPQETLFL (78 aa)) constitute a UBX domain. Thr579 carries the phosphothreonine modification. A Phosphoserine modification is found at Ser581.

As to quaternary structure, interacts with CDT1 and ATPase VCP/p97. Interacts (via UBA domain) with FAS (via death domain). Interacts (via UBA domain) with NLRP12 (via DAPIN/PYRIN domain). Central nervous system.

It is found in the nucleus. Ubiquitin-binding protein. Required for the progression of DNA replication forks by targeting DNA replication licensing factor CDT1 for degradation. Potentiates but cannot initiate FAS-induced apoptosis. This is FAS-associated factor 1 (Faf1) from Rattus norvegicus (Rat).